We begin with the raw amino-acid sequence, 147 residues long: UPF0275 protein PM0504 (147 aa).

Belongs to the UPF0275 family.

The chain is UPF0275 protein PM0504 from Pasteurella multocida (strain Pm70).